A 961-amino-acid polypeptide reads, in one-letter code: Cytochrome b5-like reductase apf12 (961 aa).

FAD is bound at residue Ala298. The FAD-binding FR-type domain occupies 429–548 (ARPQVDAFAW…IKPAPHFRIA (120 aa)). NADP(+) contacts are provided by residues 453–456 (SRIQ), 499–500 (SK), and Gly753. A Cytochrome b5 heme-binding domain is found at 716–793 (LNQITKLELA…LNEMVIGRLD (78 aa)). 753 to 755 (GGE) serves as a coordination point for FAD.

The protein belongs to the flavoprotein pyridine nucleotide cytochrome reductase family. FAD is required as a cofactor.

It participates in secondary metabolite biosynthesis. Its function is as follows. Cytochrome b5-like reductase; part of the gene cluster that mediates the biosynthesis of the cyclic tetrapeptide apicidin F (APF). The non-ribosomal peptide synthetase apf1 incorporates four different amino acids to produce apicidin F: L-phenylalanine, D-pipecolic acid (D-pip), N-methoxy-L-tryptophan and L-2-aminooctanedioic acid. L-Phenylalanine is the only proteinogenic amino acid directly used by apf1. The 3 other apf1 substrates are non-proteinogenic and have to be modified by other enzymes of the cluster. Lysine is converted to delta-1-pyrroline-5-carboxylate (P5C) which is reduced to L-pipecolic acid (L-pip) by apf3. L-pip is epimerized to D-pip, probably by apf1 activity, prior to incorporation. L-Tryptophan is N-oxidyzed by one of the cytochrome P450 monooxygenases (apf7 or apf8), and further methylated at the hydroxy group by the O-methyltransferase apf6 to yield N-methoxy-L-tryptophan. The synthesis of the fourth apf1 substrate is more complex. The fatty acid synthase apf5 is involved in the synthesis of the octanoic acid backbone of L-2-aminooctanedioic acid by fixing one acetyl-CoA unit and three malonyl-CoA units. Then one of the cytochrome P450 monooxygenases (apf7 or apf8) may oxidize this backbone to 2-oxooctanoic acid. The aminotransferase apf4 is predicted to catalyze the exchange of the keto group with an amino group. The next step would be the oxidation of 2-aminooctanoic acid by one of the cytochrome P450 monooxygenases (apf7 or apf8). The last step is the oxidation of 2-amino-8-hydroxyoctanoic acid to 2-aminooctanedioic acid is catalyzed by the FAD-dependent monooxygenase apf9. The protein is Cytochrome b5-like reductase apf12 of Gibberella fujikuroi (strain CBS 195.34 / IMI 58289 / NRRL A-6831) (Bakanae and foot rot disease fungus).